We begin with the raw amino-acid sequence, 220 residues long: 3-dehydroquinate dehydratase (220 aa).

Residues Ser-8, 30–32 (ELR), and Arg-63 each bind 3-dehydroquinate. The active-site Proton donor/acceptor is the His-114. Lys-140 (schiff-base intermediate with substrate) is an active-site residue. Arg-174 and Gln-197 together coordinate 3-dehydroquinate.

The protein belongs to the type-I 3-dehydroquinase family. As to quaternary structure, homodimer.

The enzyme catalyses 3-dehydroquinate = 3-dehydroshikimate + H2O. It participates in metabolic intermediate biosynthesis; chorismate biosynthesis; chorismate from D-erythrose 4-phosphate and phosphoenolpyruvate: step 3/7. In terms of biological role, involved in the third step of the chorismate pathway, which leads to the biosynthesis of aromatic amino acids. Catalyzes the cis-dehydration of 3-dehydroquinate (DHQ) and introduces the first double bond of the aromatic ring to yield 3-dehydroshikimate. The polypeptide is 3-dehydroquinate dehydratase (Saccharolobus solfataricus (strain ATCC 35092 / DSM 1617 / JCM 11322 / P2) (Sulfolobus solfataricus)).